The primary structure comprises 80 residues: Exodeoxyribonuclease 7 small subunit (80 aa).

It belongs to the XseB family. Heterooligomer composed of large and small subunits.

The protein localises to the cytoplasm. It carries out the reaction Exonucleolytic cleavage in either 5'- to 3'- or 3'- to 5'-direction to yield nucleoside 5'-phosphates.. Bidirectionally degrades single-stranded DNA into large acid-insoluble oligonucleotides, which are then degraded further into small acid-soluble oligonucleotides. This Cronobacter sakazakii (strain ATCC BAA-894) (Enterobacter sakazakii) protein is Exodeoxyribonuclease 7 small subunit.